Consider the following 581-residue polypeptide: Fibrous sheath-interacting protein 1 (581 aa).

The tract at residues 1 to 77 (MDIIKGNLDG…SNDDKQESCS (77 aa)) is disordered. Positions 14 to 30 (PASNSRIRPGSRSSNAS) are enriched in polar residues. A compositionally biased stretch (basic and acidic residues) spans 52–77 (GKEDHSESSNTENRRTSNDDKQESCS). Residue serine 87 is modified to Phosphoserine. A coiled-coil region spans residues 105–153 (EPKLKELDSQLQDAIQKMKKLDKILAKKQRREKEIKKQGLEMRIKLWEE). Disordered stretches follow at residues 338-365 (SSFSPRLENRNNQKPDRDGERNMEVTPG) and 555-581 (HLKLSSPENTIADEQETKDAAEECKEP). 2 stretches are compositionally biased toward basic and acidic residues: residues 344-360 (LENRNNQKPDRDGERNM) and 569-581 (QETKDAAEECKEP).

The protein belongs to the FSIP1 family.

The chain is Fibrous sheath-interacting protein 1 (FSIP1) from Homo sapiens (Human).